The primary structure comprises 268 residues: Casein kinase II subunit beta (268 aa).

The interval Leu-222–Lys-268 is disordered. The span at Asn-224–Lys-268 shows a compositional bias: low complexity.

It belongs to the casein kinase 2 subunit beta family. As to quaternary structure, casein kinase II/CK2 is a tetramer composed of two alpha subunit and two beta subunits.

Its function is as follows. Regulatory subunit of casein kinase II/CK2. As part of the kinase complex regulates the basal catalytic activity of the alpha subunit a constitutively active serine/threonine-protein kinase that phosphorylates a large number of substrates containing acidic residues C-terminal to the phosphorylated serine or threonine. In Dictyostelium discoideum (Social amoeba), this protein is Casein kinase II subunit beta (csnk2b).